A 501-amino-acid polypeptide reads, in one-letter code: Lysine--tRNA ligase (501 aa).

Mg(2+) contacts are provided by Glu404 and Glu411.

The protein belongs to the class-II aminoacyl-tRNA synthetase family. As to quaternary structure, homodimer. Mg(2+) serves as cofactor.

The protein resides in the cytoplasm. The catalysed reaction is tRNA(Lys) + L-lysine + ATP = L-lysyl-tRNA(Lys) + AMP + diphosphate. In Campylobacter jejuni subsp. jejuni serotype O:6 (strain 81116 / NCTC 11828), this protein is Lysine--tRNA ligase.